Reading from the N-terminus, the 491-residue chain is Probable cytosol aminopeptidase (491 aa).

The Mn(2+) site is built by Lys260 and Asp265. The active site involves Lys272. Residues Asp284, Asp343, and Glu345 each coordinate Mn(2+). Arg347 is an active-site residue.

It belongs to the peptidase M17 family. It depends on Mn(2+) as a cofactor.

It localises to the cytoplasm. The catalysed reaction is Release of an N-terminal amino acid, Xaa-|-Yaa-, in which Xaa is preferably Leu, but may be other amino acids including Pro although not Arg or Lys, and Yaa may be Pro. Amino acid amides and methyl esters are also readily hydrolyzed, but rates on arylamides are exceedingly low.. It catalyses the reaction Release of an N-terminal amino acid, preferentially leucine, but not glutamic or aspartic acids.. Functionally, presumably involved in the processing and regular turnover of intracellular proteins. Catalyzes the removal of unsubstituted N-terminal amino acids from various peptides. The chain is Probable cytosol aminopeptidase from Trichormus variabilis (strain ATCC 29413 / PCC 7937) (Anabaena variabilis).